The chain runs to 363 residues: MQAGFFHTPYNLPTRTARQMFDWSLKLAQVCDEAGFADFMIGEHSTLAWENIPCPEIIIGAAAPLTKNIRFAPMAHLLPYHNPASLAIQVGWLSQILEGRYFLGVAPGGHHTDAILHGFEGIGPLQEQMFEALELMEKVWARKPFMEKGKFFQAGFPGPDTMPEYDVEIADNSPWGGREALEIAVTGLTKNSSSLKWAGERNYSPISFFGGHEVMRSHYDTWAAAMQSKGFTPDTSRFRVTREIFIADTDAEARKRAKASGMAKTWEHYLFPIYKKFNLFPGIIADAGLDIDPSQIDMDFLADHVWLCGSPETVKGKIENMIERSGGCGQIIVNSHDNIDNPEPYFESLQRLAQEVLPNVKTS.

FMN contacts are provided by residues methionine 74 and 186-194 (TGLTKNSSS).

The protein belongs to the bacterial luciferase oxidoreductase family. Homodimer. Likely forms a loose transient complex with a P.putida flavin reductase that provides the required FMNH(2) to the enzyme.

It catalyses the reaction (1R,4R)-bornane-2,5-dione + FMNH2 + O2 = (1R,4R)-5-oxo-1,2-campholide + FMN + H2O + H(+). The protein operates within terpene metabolism; (R)-camphor degradation. Involved in the degradation and assimilation of (+)-camphor, which allows P.putida strain NCIMB 10007 to grow on this enantiomer of camphor as the sole carbon source. Catalyzes the FMNH(2)-dependent lactonization of 2,5-diketocamphane via a Baeyer-Villiger oxidation to produce the unstable lactone 5-oxo-1,2-campholide with (R,R) configuration, that presumably undergoes spontaneous hydrolysis to form 2-oxo-Delta(3)-4,5,5-trimethylcyclopentenylacetate. Is also able to convert (+)-camphor and norcamphor to the corresponding lactone in vitro. Shows no conversion of (-)-camphor, (+)-fenchone, (-)-fenchone, and (+)-nopinone. Acts on other bicyclic ketones and, to a lesser extent, on some 2- and 4-substituted monocyclic ketones. This chain is 2,5-diketocamphane 1,2-monooxygenase 2, found in Pseudomonas putida (Arthrobacter siderocapsulatus).